Here is a 256-residue protein sequence, read N- to C-terminus: Hydroxyacylglutathione hydrolase (256 aa).

Positions 56, 58, 60, 61, 114, 133, and 171 each coordinate Zn(2+).

The protein belongs to the metallo-beta-lactamase superfamily. Glyoxalase II family. Monomer. Requires Zn(2+) as cofactor.

The catalysed reaction is an S-(2-hydroxyacyl)glutathione + H2O = a 2-hydroxy carboxylate + glutathione + H(+). It functions in the pathway secondary metabolite metabolism; methylglyoxal degradation; (R)-lactate from methylglyoxal: step 2/2. Thiolesterase that catalyzes the hydrolysis of S-D-lactoyl-glutathione to form glutathione and D-lactic acid. This Rhodobacter capsulatus (Rhodopseudomonas capsulata) protein is Hydroxyacylglutathione hydrolase.